The following is a 703-amino-acid chain: RING finger protein 214 (703 aa).

Disordered stretches follow at residues 1–59 (MAAS…TITK), 104–134 (GSQS…VTRS), and 146–197 (SRNC…SSSL). A2 bears the N-acetylalanine mark. S15, S40, S47, and S54 each carry phosphoserine. Over residues 37 to 59 (TKDSAQKQKNSPLLSVSSQTITK) the composition is skewed to polar residues. 2 positions are modified to phosphoserine: S176 and S196. A coiled-coil region spans residues 220 to 379 (QDIEKNLDKM…AEKEAELHLT (160 aa)). The interval 486-552 (FPILNPALSQ…SAETPRPQPV (67 aa)) is disordered. Low complexity predominate over residues 493 to 504 (LSQPSQPSSPLP). Phosphoserine occurs at positions 497, 511, and 516. The span at 523–536 (PHMPPAASIPPPPG) shows a compositional bias: pro residues. The RING-type; atypical zinc finger occupies 658 to 700 (CLMCQKLVQPSELHPMACTHVLHKECIKFWAQTNTNDTCPFCP).

The chain is RING finger protein 214 (RNF214) from Homo sapiens (Human).